The following is a 424-amino-acid chain: Hydrolase ORFZ (424 aa).

The active-site Nucleophile is Ser243.

It belongs to the AB hydrolase superfamily. FUS2 hydrolase family. Homodimer.

It functions in the pathway secondary metabolite biosynthesis. Its function is as follows. Hydrolyase; part of the gene cluster that mediates the biosynthesis of a tyrosine-derived cytochalasan acting as a fungal signal recognized by resistant rice plants and leads to avirulence in Pi33 resistant rice cultivars. The first step in the pathway is catalyzed by the hybrid PKS-NRPS ACE1, assisted by the enoyl reductase RAP1, that are responsible for fusion of the tyrosine precursor and the polyketide backbone. The polyketide synthase module (PKS) of ACE1 is responsible for the synthesis of the polyketide backbone and the downstream nonribosomal peptide synthetase (NRPS) amidates the carboxyl end of the polyketide with the tyrosine precursor. Because ACE1 lacks a designated enoylreductase (ER) domain, the required activity is provided the enoyl reductase RAP1. Reduction by the hydrolyase ORFZ, followed by dehydration and intra-molecular Diels-Alder cyclization by the Diels-Alderase ORF3 then yield the required isoindolone-fused macrocycle. A number of oxidative steps catalyzed by the tailoring enzymes identified within the cluster, including cytochrome P450 monooxygenases CYP1 to CYP4, the FAD-linked oxidoreductase OXR2 and the short-chain dehydrogenase/reductase OXR1, are further required to afford the final cytochalasans that confer avirulence and which have still to be identified. The monooxygenase CYP1 has been shown to be a site-selective C-18 hydroxylase whereas the function of CYP3 is the site-selective epoxidation of the C-6/C-7 olefin that is present in some intermediate compounds. Finally, SYN2 and RAP2 are not required for avirulence in Pi33 resistant rice cultivars. In Pyricularia oryzae (strain 70-15 / ATCC MYA-4617 / FGSC 8958) (Rice blast fungus), this protein is Hydrolase ORFZ.